The chain runs to 197 residues: Imidazoleglycerol-phosphate dehydratase (197 aa).

It belongs to the imidazoleglycerol-phosphate dehydratase family.

It is found in the cytoplasm. It carries out the reaction D-erythro-1-(imidazol-4-yl)glycerol 3-phosphate = 3-(imidazol-4-yl)-2-oxopropyl phosphate + H2O. It participates in amino-acid biosynthesis; L-histidine biosynthesis; L-histidine from 5-phospho-alpha-D-ribose 1-diphosphate: step 6/9. This chain is Imidazoleglycerol-phosphate dehydratase, found in Rhodopseudomonas palustris (strain HaA2).